The primary structure comprises 192 residues: MAQLYFYYSSMNAGKSTHLLQSSYNYQERGLVTAIYTAKIDDRFAKGKVASRLGIDADAFLFDEKINLFKDVDQKHQAEKIDCVLIDEAQFLSTEQVKQLTDIVDLLHIPVLAYGIRTDFLGQTFSGSAALLAWADKLVELKTICHCGRKANFVIRQDANGKAVQNGEQVEVGGNERYEPLCRAHFKQLVWL.

ATP is bound by residues 9-16 (SSMNAGKS) and 87-90 (DEAQ). Glu-88 serves as the catalytic Proton acceptor. Zn(2+) is bound by residues Cys-145, Cys-147, Cys-182, and His-185.

Belongs to the thymidine kinase family. In terms of assembly, homotetramer.

The protein localises to the cytoplasm. It catalyses the reaction thymidine + ATP = dTMP + ADP + H(+). This is Thymidine kinase from Colwellia psychrerythraea (strain 34H / ATCC BAA-681) (Vibrio psychroerythus).